The following is a 410-amino-acid chain: Putative competence-damage inducible protein (410 aa).

This sequence belongs to the CinA family.

This Clostridium beijerinckii (strain ATCC 51743 / NCIMB 8052) (Clostridium acetobutylicum) protein is Putative competence-damage inducible protein.